Reading from the N-terminus, the 578-residue chain is CTP synthase 2 (578 aa).

In terms of domain architecture, Glutamine amidotransferase type-1 spans 305–564 (KIALVGKYTN…VAAASGTLGD (260 aa)). Catalysis depends on for GATase activity residues Cys-404, His-537, and Glu-539.

Belongs to the CTP synthase family. Homodimer. Oligomerizes to a tetramer in the presence of its substrates UTP and ATP. Requires Mg(2+) as cofactor.

It localises to the cytoplasm. It carries out the reaction UTP + L-glutamine + ATP + H2O = CTP + L-glutamate + ADP + phosphate + 2 H(+). It participates in pyrimidine metabolism; CTP biosynthesis via de novo pathway; CTP from UDP: step 2/2. Activated by GTP. Subject to allosteric product inhibition by CTP. Inhibited by p-chloromercuriphenylsulfonic acid, N-ethylmaleimide and cyclopentenylcytosine (CPEC). In terms of biological role, catalyzes the ATP-dependent amination of UTP to CTP with either L-glutamine or ammonia as the source of nitrogen. Plays an important role in the regulation of phospholipid synthesis. The protein is CTP synthase 2 (URA8) of Saccharomyces cerevisiae (strain YJM789) (Baker's yeast).